An 87-amino-acid chain; its full sequence is Phosphoribosyl-ATP pyrophosphatase (87 aa).

It belongs to the PRA-PH family.

The protein resides in the cytoplasm. It catalyses the reaction 1-(5-phospho-beta-D-ribosyl)-ATP + H2O = 1-(5-phospho-beta-D-ribosyl)-5'-AMP + diphosphate + H(+). It functions in the pathway amino-acid biosynthesis; L-histidine biosynthesis; L-histidine from 5-phospho-alpha-D-ribose 1-diphosphate: step 2/9. The protein is Phosphoribosyl-ATP pyrophosphatase of Bifidobacterium longum (strain DJO10A).